We begin with the raw amino-acid sequence, 128 residues long: Calcitonin gene-related peptide 1 (128 aa).

Positions 1–25 (MGFLKFSPFLVVSILLLYQACGLQA) are cleaved as a signal peptide. A propeptide spanning residues 26–80 (VPLRSTLESSPGMAATLSEEEARLLLAALVQNYMQMKVRELEQEQEAEGSSVTAQ) is cleaved from the precursor. A disulfide bridge links Cys-84 with Cys-89. Phe-119 is subject to Phenylalanine amide. Positions 125–128 (DLQA) are excised as a propeptide.

The protein belongs to the calcitonin family.

The protein localises to the secreted. CGRP1/CALCA is a peptide hormone that induces vasodilation mediated by the CALCRL-RAMP1 receptor complex. Dilates a variety of vessels including the coronary, cerebral and systemic vasculature. Its abundance in the CNS also points toward a neurotransmitter or neuromodulator role. It also elevates platelet cAMP. CGRP1 can also bind and activate CALCR-RAMP1 (AMYR1) receptor complex. This Rattus norvegicus (Rat) protein is Calcitonin gene-related peptide 1.